Consider the following 320-residue polypeptide: Ferrochelatase (320 aa).

Fe cation contacts are provided by H194 and E275.

This sequence belongs to the ferrochelatase family. In terms of assembly, monomer.

It is found in the cytoplasm. The catalysed reaction is heme b + 2 H(+) = protoporphyrin IX + Fe(2+). Its pathway is porphyrin-containing compound metabolism; protoheme biosynthesis; protoheme from protoporphyrin-IX: step 1/1. Its function is as follows. Catalyzes the ferrous insertion into protoporphyrin IX. The chain is Ferrochelatase from Salmonella agona (strain SL483).